Reading from the N-terminus, the 42-residue chain is Photosystem I reaction center subunit IX (42 aa).

A helical transmembrane segment spans residues 7 to 27; that stretch reads YLSVAPVLSTLWFGILAGLLI.

This sequence belongs to the PsaJ family.

It localises to the plastid. It is found in the chloroplast thylakoid membrane. Functionally, may help in the organization of the PsaE and PsaF subunits. This chain is Photosystem I reaction center subunit IX, found in Lemna minor (Common duckweed).